Consider the following 388-residue polypeptide: Putative [LysW]-aminoadipate semialdehyde/glutamate semialdehyde transaminase (388 aa).

Pyridoxal 5'-phosphate contacts are provided by residues 100 to 101 and Phe127; that span reads GT. Arg130 lines the substrate pocket. Pyridoxal 5'-phosphate is bound at residue 211-214; the sequence is DEIQ. Lys240 carries the post-translational modification N6-(pyridoxal phosphate)lysine. Position 268 (Ser268) interacts with substrate. Thr269 is a pyridoxal 5'-phosphate binding site.

The protein belongs to the class-III pyridoxal-phosphate-dependent aminotransferase family. LysJ subfamily. As to quaternary structure, homodimer. Pyridoxal 5'-phosphate is required as a cofactor.

The protein localises to the cytoplasm. It catalyses the reaction [amino-group carrier protein]-C-terminal-gamma-(L-lysyl)-L-glutamate + 2-oxoglutarate = [amino-group carrier protein]-C-terminal-N-(1-carboxy-5-oxopentan-1-yl)-L-glutamine + L-glutamate. The catalysed reaction is [amino-group carrier protein]-C-terminal-gamma-(L-ornithyl)-L-glutamate + 2-oxoglutarate = [amino-group carrier protein]-C-terminal-gamma-(L-glutamyl-5-semialdehyde)-L-glutamate + L-glutamate. It functions in the pathway amino-acid biosynthesis; L-lysine biosynthesis via AAA pathway; L-lysine from L-alpha-aminoadipate (Thermus route): step 4/5. Its pathway is amino-acid biosynthesis; L-arginine biosynthesis. In terms of biological role, involved in both the arginine and lysine biosynthetic pathways. The chain is Putative [LysW]-aminoadipate semialdehyde/glutamate semialdehyde transaminase from Aeropyrum pernix (strain ATCC 700893 / DSM 11879 / JCM 9820 / NBRC 100138 / K1).